We begin with the raw amino-acid sequence, 1465 residues long: DNA polymerase III PolC-type (1465 aa).

The Exonuclease domain maps to 427-583; it reads YVVFDVETTG…YDAEATGRLL (157 aa).

Belongs to the DNA polymerase type-C family. PolC subfamily.

It localises to the cytoplasm. The catalysed reaction is DNA(n) + a 2'-deoxyribonucleoside 5'-triphosphate = DNA(n+1) + diphosphate. Required for replicative DNA synthesis. This DNA polymerase also exhibits 3' to 5' exonuclease activity. The chain is DNA polymerase III PolC-type from Streptococcus pyogenes serotype M2 (strain MGAS10270).